The primary structure comprises 426 residues: Serine--tRNA ligase (426 aa).

233–235 contributes to the L-serine binding site; that stretch reads TAE. Residue 264–266 coordinates ATP; the sequence is RRE. E287 provides a ligand contact to L-serine. 351–354 serves as a coordination point for ATP; sequence EISS. S386 serves as a coordination point for L-serine.

The protein belongs to the class-II aminoacyl-tRNA synthetase family. Type-1 seryl-tRNA synthetase subfamily. In terms of assembly, homodimer. The tRNA molecule binds across the dimer.

It is found in the cytoplasm. It catalyses the reaction tRNA(Ser) + L-serine + ATP = L-seryl-tRNA(Ser) + AMP + diphosphate + H(+). It carries out the reaction tRNA(Sec) + L-serine + ATP = L-seryl-tRNA(Sec) + AMP + diphosphate + H(+). It participates in aminoacyl-tRNA biosynthesis; selenocysteinyl-tRNA(Sec) biosynthesis; L-seryl-tRNA(Sec) from L-serine and tRNA(Sec): step 1/1. Catalyzes the attachment of serine to tRNA(Ser). Is also able to aminoacylate tRNA(Sec) with serine, to form the misacylated tRNA L-seryl-tRNA(Sec), which will be further converted into selenocysteinyl-tRNA(Sec). The protein is Serine--tRNA ligase of Prochlorococcus marinus (strain NATL2A).